A 416-amino-acid chain; its full sequence is Glutamyl-tRNA reductase (416 aa).

Substrate-binding positions include 51–54 (TCNR), Ser-110, 115–117 (EPQ), and Gln-121. Cys-52 functions as the Nucleophile in the catalytic mechanism. Position 190-195 (190-195 (GAGQTG)) interacts with NADP(+).

The protein belongs to the glutamyl-tRNA reductase family. In terms of assembly, homodimer.

The catalysed reaction is (S)-4-amino-5-oxopentanoate + tRNA(Glu) + NADP(+) = L-glutamyl-tRNA(Glu) + NADPH + H(+). Its pathway is porphyrin-containing compound metabolism; protoporphyrin-IX biosynthesis; 5-aminolevulinate from L-glutamyl-tRNA(Glu): step 1/2. Catalyzes the NADPH-dependent reduction of glutamyl-tRNA(Glu) to glutamate 1-semialdehyde (GSA). In Francisella tularensis subsp. holarctica (strain OSU18), this protein is Glutamyl-tRNA reductase.